The primary structure comprises 360 residues: DNA replication and repair protein RecF (360 aa).

An ATP-binding site is contributed by 30 to 37; that stretch reads GQNGSGKT.

It belongs to the RecF family.

The protein localises to the cytoplasm. The RecF protein is involved in DNA metabolism; it is required for DNA replication and normal SOS inducibility. RecF binds preferentially to single-stranded, linear DNA. It also seems to bind ATP. The chain is DNA replication and repair protein RecF from Shewanella piezotolerans (strain WP3 / JCM 13877).